Reading from the N-terminus, the 269-residue chain is LOB domain-containing protein 6 (269 aa).

In terms of domain architecture, LOB spans 37–138 (SPCAACKFLR…QDLARAKFEL (102 aa)).

The protein belongs to the LOB domain-containing protein family.

The protein localises to the nucleus. Negative regulator of cell proliferation in the adaxial side of leaves. Regulates the formation of a symmetric lamina and the establishment of venation. In Oryza sativa subsp. indica (Rice), this protein is LOB domain-containing protein 6 (LBD6).